Here is a 384-residue protein sequence, read N- to C-terminus: G protein-coupled receptor 88 (384 aa).

The Extracellular portion of the chain corresponds to 1-35 (MTNSSSTSTSSTTGGSLLLLCEEEESWAGRRIPVS). N-linked (GlcNAc...) asparagine glycosylation occurs at Asn-3. A helical transmembrane segment spans residues 36–56 (LLYSGLAIGGTLANGMVIYLV). At 57-73 (SSFRKLQTTSNAFIVNG) the chain is on the cytoplasmic side. Residues 74-94 (CAADLSVCALWMPQEAVLGLL) traverse the membrane as a helical segment. The Extracellular segment spans residues 95–116 (PTGSAEPPADWDGAGGSYRLLR). Residues 117-136 (GGLLGLGLTVSLLSHCLVAL) traverse the membrane as a helical segment. Over 137–158 (NRYLLITRAPATYQALYQRRHT) the chain is Cytoplasmic. Residues 159–179 (AGMLALSWALALGLVLLLPPW) traverse the membrane as a helical segment. Over 180 to 195 (APRPGAAPPRVHYPAL) the chain is Extracellular. Residues 196–216 (LAAAALLAQTALLLHCYLGIV) form a helical membrane-spanning segment. Residues 217–285 (RRVRVSVKRV…RAQRRLSGLS (69 aa)) lie on the Cytoplasmic side of the membrane. A helical membrane pass occupies residues 286–306 (VLLLCCVFLLATQPLVWVSLA). Over 307 to 310 (SGFS) the chain is Extracellular. Residues 311–331 (LPVPWGVQAASWLLCCALSAL) traverse the membrane as a helical segment. The Cytoplasmic segment spans residues 332–384 (NPLLYTWRNEEFRRSVRSVLPGVGDAAAAAVAATAVPAVSQAQLGTRAAGQHW).

Belongs to the G-protein coupled receptor 1 family. Expressed predominantly in the striatum.

The protein localises to the cell membrane. It localises to the cell projection. It is found in the cilium membrane. Its subcellular location is the cytoplasm. The protein resides in the nucleus. Functionally, orphan G protein-coupled receptor implicated in a large repertoire of behavioral responses that engage motor activities, spatial learning, and emotional processing. May play a role in the regulation of cognitive and motor function. Couples with the heterotrimeric G protein complex of the G(i) subfamily, consisting of GNAI1, GNB1 and GNG2, thereby acting through a G(i)-mediated pathway. Plays a role in the attenuation of D1 dopamine receptor (D1R)-mediated cAMP response in ciliated cells. In non-ciliated cells, involved in the inhibition of the beta-2 adrenergic receptor (B2AR) response. The sequence is that of G protein-coupled receptor 88 (GPR88) from Homo sapiens (Human).